We begin with the raw amino-acid sequence, 476 residues long: Aspartyl/glutamyl-tRNA(Asn/Gln) amidotransferase subunit B (476 aa).

It belongs to the GatB/GatE family. GatB subfamily. As to quaternary structure, heterotrimer of A, B and C subunits.

It catalyses the reaction L-glutamyl-tRNA(Gln) + L-glutamine + ATP + H2O = L-glutaminyl-tRNA(Gln) + L-glutamate + ADP + phosphate + H(+). The catalysed reaction is L-aspartyl-tRNA(Asn) + L-glutamine + ATP + H2O = L-asparaginyl-tRNA(Asn) + L-glutamate + ADP + phosphate + 2 H(+). In terms of biological role, allows the formation of correctly charged Asn-tRNA(Asn) or Gln-tRNA(Gln) through the transamidation of misacylated Asp-tRNA(Asn) or Glu-tRNA(Gln) in organisms which lack either or both of asparaginyl-tRNA or glutaminyl-tRNA synthetases. The reaction takes place in the presence of glutamine and ATP through an activated phospho-Asp-tRNA(Asn) or phospho-Glu-tRNA(Gln). The polypeptide is Aspartyl/glutamyl-tRNA(Asn/Gln) amidotransferase subunit B (Clostridium botulinum (strain 657 / Type Ba4)).